A 411-amino-acid chain; its full sequence is uncharacterized protein (411 aa).

The interval 32–108 (LGGDPAPKPT…PEHPRRIPIP (77 aa)) is disordered.

This is an uncharacterized protein from Ictalurid herpesvirus 1 (strain Auburn) (IcHV-1).